The sequence spans 426 residues: Zinc finger CCCH domain-containing protein 13 (426 aa).

The C3H1-type zinc-finger motif lies at 10-36 (AYKTKLCALWQRGNCNRDTCSFAHGHG). 3 disordered regions span residues 34 to 155 (GHGD…HEKQ), 253 to 317 (NEEG…DKTS), and 390 to 426 (NDAD…VDVE). Basic and acidic residues-rich tracts occupy residues 54-70 (RRDY…DRRF), 78-101 (PGRE…RDSS), and 108-120 (RKSE…KTDD). Residues 124 to 133 (NSSRSLSLSD) show a composition bias toward low complexity. A compositionally biased stretch (basic and acidic residues) spans 135–155 (NDEKKKDKFSSGDEKEDHEKQ). Residues 144–245 (SSGDEKEDHE…FERLGDLLAS (102 aa)) are a coiled coil. Over residues 255 to 272 (EGSSVNEDLNERSPNTAA) the composition is skewed to polar residues. A compositionally biased stretch (basic and acidic residues) spans 284-317 (EEAKAVKKRRERDSDTMTRSDKYRSDVTDFDKTS). The segment covering 416–426 (YEGDDEEVDVE) has biased composition (acidic residues).

The sequence is that of Zinc finger CCCH domain-containing protein 13 from Oryza sativa subsp. japonica (Rice).